Reading from the N-terminus, the 264-residue chain is Thymidylate synthase (264 aa).

DUMP is bound at residue Arg-21. Residue His-51 participates in (6R)-5,10-methylene-5,6,7,8-tetrahydrofolate binding. 126–127 (RR) provides a ligand contact to dUMP. Cys-146 acts as the Nucleophile in catalysis. Residues 166–169 (RSAD), Asn-177, and 207–209 (HLY) contribute to the dUMP site. Asp-169 is a (6R)-5,10-methylene-5,6,7,8-tetrahydrofolate binding site. Ala-263 contributes to the (6R)-5,10-methylene-5,6,7,8-tetrahydrofolate binding site.

This sequence belongs to the thymidylate synthase family. Bacterial-type ThyA subfamily. In terms of assembly, homodimer.

The protein localises to the cytoplasm. The catalysed reaction is dUMP + (6R)-5,10-methylene-5,6,7,8-tetrahydrofolate = 7,8-dihydrofolate + dTMP. Its pathway is pyrimidine metabolism; dTTP biosynthesis. Functionally, catalyzes the reductive methylation of 2'-deoxyuridine-5'-monophosphate (dUMP) to 2'-deoxythymidine-5'-monophosphate (dTMP) while utilizing 5,10-methylenetetrahydrofolate (mTHF) as the methyl donor and reductant in the reaction, yielding dihydrofolate (DHF) as a by-product. This enzymatic reaction provides an intracellular de novo source of dTMP, an essential precursor for DNA biosynthesis. This chain is Thymidylate synthase, found in Bartonella bacilliformis (strain ATCC 35685 / KC583 / Herrer 020/F12,63).